The chain runs to 609 residues: UvrABC system protein C (609 aa).

In terms of domain architecture, GIY-YIG spans 16 to 94 (SSAGVYRMYD…IKQYMPKYNV (79 aa)). One can recognise a UVR domain in the interval 203-238 (KQVISELVAKMEEAAEQQAYEQAARFRDQIMALRRV).

The protein belongs to the UvrC family. In terms of assembly, interacts with UvrB in an incision complex.

Its subcellular location is the cytoplasm. In terms of biological role, the UvrABC repair system catalyzes the recognition and processing of DNA lesions. UvrC both incises the 5' and 3' sides of the lesion. The N-terminal half is responsible for the 3' incision and the C-terminal half is responsible for the 5' incision. The protein is UvrABC system protein C of Shewanella oneidensis (strain ATCC 700550 / JCM 31522 / CIP 106686 / LMG 19005 / NCIMB 14063 / MR-1).